We begin with the raw amino-acid sequence, 431 residues long: Histidinol dehydrogenase (431 aa).

Y127, Q185, and N208 together coordinate NAD(+). Substrate-binding residues include S234, Q256, and H259. Residues Q256 and H259 each contribute to the Zn(2+) site. Residues E323 and H324 each act as proton acceptor in the active site. 4 residues coordinate substrate: H324, D357, E411, and H416. D357 lines the Zn(2+) pocket. Residue H416 coordinates Zn(2+).

The protein belongs to the histidinol dehydrogenase family. Zn(2+) is required as a cofactor.

It carries out the reaction L-histidinol + 2 NAD(+) + H2O = L-histidine + 2 NADH + 3 H(+). The protein operates within amino-acid biosynthesis; L-histidine biosynthesis; L-histidine from 5-phospho-alpha-D-ribose 1-diphosphate: step 9/9. Its function is as follows. Catalyzes the sequential NAD-dependent oxidations of L-histidinol to L-histidinaldehyde and then to L-histidine. The chain is Histidinol dehydrogenase from Vibrio cholerae serotype O1 (strain ATCC 39315 / El Tor Inaba N16961).